The sequence spans 269 residues: uncharacterized protein (269 aa).

One can recognise an HTH gntR-type domain in the interval 5-73 (APKWRELADR…RGHGTVVRRK (69 aa)). The H-T-H motif DNA-binding region spans 33-52 (IRDLVEAGEGSKETVHRAYK).

The imp locus inhibits the extrachromosomal maintenance of the Streptomyces plasmid SLP1. This is an uncharacterized protein from Streptomyces coelicolor (strain ATCC BAA-471 / A3(2) / M145).